Consider the following 507-residue polypeptide: Arabinose import ATP-binding protein AraG (507 aa).

ABC transporter domains follow at residues 14-249 (LRFN…MVGR) and 249-505 (RDIQ…LPRT). 46–53 (GENGAGKS) contacts ATP.

It belongs to the ABC transporter superfamily. Arabinose importer (TC 3.A.1.2.2) family. In terms of assembly, the complex is composed of two ATP-binding proteins (AraG), two transmembrane proteins (AraH) and a solute-binding protein (AraF).

Its subcellular location is the cell inner membrane. It carries out the reaction L-arabinose(out) + ATP + H2O = L-arabinose(in) + ADP + phosphate + H(+). Part of the ABC transporter complex AraFGH involved in arabinose import. Responsible for energy coupling to the transport system. The sequence is that of Arabinose import ATP-binding protein AraG from Pseudomonas savastanoi pv. phaseolicola (strain 1448A / Race 6) (Pseudomonas syringae pv. phaseolicola (strain 1448A / Race 6)).